The following is a 180-amino-acid chain: Putative adenylate kinase (180 aa).

Residues G10, G12, K13, T14, and T15 each contribute to the ATP site. Residues 30–50 (NLRDFALEKGIGEVKGDELEV) are NMP. An LID region spans residues 99 to 109 (ERGYSKDKIGE). R100 and K138 together coordinate ATP.

The protein belongs to the adenylate kinase family. AK6 subfamily. In terms of assembly, interacts with uS11. Not a structural component of 40S pre-ribosomes, but transiently interacts with them by binding to uS11.

It catalyses the reaction AMP + ATP = 2 ADP. The enzyme catalyses ATP + H2O = ADP + phosphate + H(+). Broad-specificity nucleoside monophosphate (NMP) kinase that catalyzes the reversible transfer of the terminal phosphate group between nucleoside triphosphates and monophosphates. Also has ATPase activity. Involved in the late maturation steps of the 30S ribosomal particles, specifically 16S rRNA maturation. While NMP activity is not required for ribosome maturation, ATPase activity is. Associates transiently with small ribosomal subunit protein uS11. ATP hydrolysis breaks the interaction with uS11. May temporarily remove uS11 from the ribosome to enable a conformational change of the ribosomal RNA that is needed for the final maturation step of the small ribosomal subunit. The protein is Putative adenylate kinase of Pyrococcus furiosus (strain ATCC 43587 / DSM 3638 / JCM 8422 / Vc1).